The primary structure comprises 274 residues: Large ribosomal subunit protein uL2cz/uL2cy (274 aa).

2 disordered regions span residues 1-21 (MAIH…VDSQ) and 224-274 (NPVD…RRSK).

It belongs to the universal ribosomal protein uL2 family. As to quaternary structure, part of the 50S ribosomal subunit.

Its subcellular location is the plastid. The protein localises to the chloroplast. The sequence is that of Large ribosomal subunit protein uL2cz/uL2cy (rpl2-A) from Gossypium hirsutum (Upland cotton).